The sequence spans 275 residues: 4-hydroxy-3-methylbut-2-enyl diphosphate reductase (275 aa).

Cys12 serves as a coordination point for [4Fe-4S] cluster. Residues His40 and His70 each contribute to the (2E)-4-hydroxy-3-methylbut-2-enyl diphosphate site. Positions 40 and 70 each coordinate dimethylallyl diphosphate. Residues His40 and His70 each coordinate isopentenyl diphosphate. Cys92 is a binding site for [4Fe-4S] cluster. Residue His119 participates in (2E)-4-hydroxy-3-methylbut-2-enyl diphosphate binding. Residue His119 participates in dimethylallyl diphosphate binding. Isopentenyl diphosphate is bound at residue His119. The active-site Proton donor is Glu121. (2E)-4-hydroxy-3-methylbut-2-enyl diphosphate is bound at residue Thr151. Residue Cys181 coordinates [4Fe-4S] cluster. (2E)-4-hydroxy-3-methylbut-2-enyl diphosphate contacts are provided by Ser209, Ser210, Asn211, and Ser251. The dimethylallyl diphosphate site is built by Ser209, Ser210, Asn211, and Ser251. Residues Ser209, Ser210, Asn211, and Ser251 each coordinate isopentenyl diphosphate.

It belongs to the IspH family. [4Fe-4S] cluster serves as cofactor.

The enzyme catalyses isopentenyl diphosphate + 2 oxidized [2Fe-2S]-[ferredoxin] + H2O = (2E)-4-hydroxy-3-methylbut-2-enyl diphosphate + 2 reduced [2Fe-2S]-[ferredoxin] + 2 H(+). It carries out the reaction dimethylallyl diphosphate + 2 oxidized [2Fe-2S]-[ferredoxin] + H2O = (2E)-4-hydroxy-3-methylbut-2-enyl diphosphate + 2 reduced [2Fe-2S]-[ferredoxin] + 2 H(+). It functions in the pathway isoprenoid biosynthesis; dimethylallyl diphosphate biosynthesis; dimethylallyl diphosphate from (2E)-4-hydroxy-3-methylbutenyl diphosphate: step 1/1. The protein operates within isoprenoid biosynthesis; isopentenyl diphosphate biosynthesis via DXP pathway; isopentenyl diphosphate from 1-deoxy-D-xylulose 5-phosphate: step 6/6. Its function is as follows. Catalyzes the conversion of 1-hydroxy-2-methyl-2-(E)-butenyl 4-diphosphate (HMBPP) into a mixture of isopentenyl diphosphate (IPP) and dimethylallyl diphosphate (DMAPP). Acts in the terminal step of the DOXP/MEP pathway for isoprenoid precursor biosynthesis. The sequence is that of 4-hydroxy-3-methylbut-2-enyl diphosphate reductase from Thermotoga petrophila (strain ATCC BAA-488 / DSM 13995 / JCM 10881 / RKU-1).